The sequence spans 336 residues: tRNA-dihydrouridine(20/20a) synthase (336 aa).

FMN contacts are provided by residues 24 to 26 (PMM) and Gln77. The active-site Proton donor is the Cys107. Residues Lys146, His178, 218 to 220 (NGG), and 240 to 241 (GR) each bind FMN.

The protein belongs to the Dus family. DusA subfamily. FMN serves as cofactor.

It carries out the reaction 5,6-dihydrouridine(20) in tRNA + NADP(+) = uridine(20) in tRNA + NADPH + H(+). The catalysed reaction is 5,6-dihydrouridine(20) in tRNA + NAD(+) = uridine(20) in tRNA + NADH + H(+). The enzyme catalyses 5,6-dihydrouridine(20a) in tRNA + NADP(+) = uridine(20a) in tRNA + NADPH + H(+). It catalyses the reaction 5,6-dihydrouridine(20a) in tRNA + NAD(+) = uridine(20a) in tRNA + NADH + H(+). Catalyzes the synthesis of 5,6-dihydrouridine (D), a modified base found in the D-loop of most tRNAs, via the reduction of the C5-C6 double bond in target uridines. Specifically modifies U20 and U20a in tRNAs. The protein is tRNA-dihydrouridine(20/20a) synthase of Pseudomonas syringae pv. tomato (strain ATCC BAA-871 / DC3000).